The chain runs to 344 residues: uncharacterized protein (344 aa).

An N-terminal signal peptide occupies residues 1 to 20 (MEIRIMLFILMMMVMPVSYA).

Belongs to the fimbrial protein family.

In terms of biological role, part of the yehABCD fimbrial operon. Could contribute to adhesion to various surfaces in specific environmental niches. This is an uncharacterized protein from Escherichia coli (strain K12).